A 393-amino-acid polypeptide reads, in one-letter code: tRNA(Met) cytidine acetate ligase (393 aa).

ATP is bound by residues Gly-81, Asn-142, and Arg-167.

The protein belongs to the TmcAL family.

It is found in the cytoplasm. The enzyme catalyses cytidine(34) in elongator tRNA(Met) + acetate + ATP = N(4)-acetylcytidine(34) in elongator tRNA(Met) + AMP + diphosphate. Catalyzes the formation of N(4)-acetylcytidine (ac(4)C) at the wobble position of elongator tRNA(Met), using acetate and ATP as substrates. First activates an acetate ion to form acetyladenylate (Ac-AMP) and then transfers the acetyl group to tRNA to form ac(4)C34. The sequence is that of tRNA(Met) cytidine acetate ligase from Bacillus cereus (strain AH820).